The primary structure comprises 596 residues: Elongation factor 4 (596 aa).

A tr-type G domain is found at D2–K184. GTP is bound by residues D14–T19 and N131–D134.

It belongs to the TRAFAC class translation factor GTPase superfamily. Classic translation factor GTPase family. LepA subfamily.

The protein localises to the cell inner membrane. It carries out the reaction GTP + H2O = GDP + phosphate + H(+). Functionally, required for accurate and efficient protein synthesis under certain stress conditions. May act as a fidelity factor of the translation reaction, by catalyzing a one-codon backward translocation of tRNAs on improperly translocated ribosomes. Back-translocation proceeds from a post-translocation (POST) complex to a pre-translocation (PRE) complex, thus giving elongation factor G a second chance to translocate the tRNAs correctly. Binds to ribosomes in a GTP-dependent manner. The chain is Elongation factor 4 from Dechloromonas aromatica (strain RCB).